Consider the following 353-residue polypeptide: Photosystem II D2 protein (353 aa).

An N-acetylthreonine modification is found at T2. At T2 the chain carries Phosphothreonine. Residues C41–T61 traverse the membrane as a helical segment. Chlorophyll a is bound at residue H118. Residues G125–P141 traverse the membrane as a helical segment. Positions 130 and 143 each coordinate pheophytin a. A helical membrane pass occupies residues V153–S166. H198 contacts chlorophyll a. A helical membrane pass occupies residues A208–D228. Residues H215 and F262 each coordinate a plastoquinone. Fe cation is bound at residue H215. H269 serves as a coordination point for Fe cation. The helical transmembrane segment at G279–R295 threads the bilayer.

It belongs to the reaction center PufL/M/PsbA/D family. As to quaternary structure, PSII is composed of 1 copy each of membrane proteins PsbA, PsbB, PsbC, PsbD, PsbE, PsbF, PsbH, PsbI, PsbJ, PsbK, PsbL, PsbM, PsbT, PsbX, PsbY, PsbZ, Psb30/Ycf12, at least 3 peripheral proteins of the oxygen-evolving complex and a large number of cofactors. It forms dimeric complexes. The D1/D2 heterodimer binds P680, chlorophylls that are the primary electron donor of PSII, and subsequent electron acceptors. It shares a non-heme iron and each subunit binds pheophytin, quinone, additional chlorophylls, carotenoids and lipids. There is also a Cl(-1) ion associated with D1 and D2, which is required for oxygen evolution. The PSII complex binds additional chlorophylls, carotenoids and specific lipids. is required as a cofactor.

It localises to the plastid. It is found in the chloroplast thylakoid membrane. It carries out the reaction 2 a plastoquinone + 4 hnu + 2 H2O = 2 a plastoquinol + O2. In terms of biological role, photosystem II (PSII) is a light-driven water:plastoquinone oxidoreductase that uses light energy to abstract electrons from H(2)O, generating O(2) and a proton gradient subsequently used for ATP formation. It consists of a core antenna complex that captures photons, and an electron transfer chain that converts photonic excitation into a charge separation. The D1/D2 (PsbA/PsbD) reaction center heterodimer binds P680, the primary electron donor of PSII as well as several subsequent electron acceptors. D2 is needed for assembly of a stable PSII complex. The protein is Photosystem II D2 protein of Coffea arabica (Arabian coffee).